The sequence spans 235 residues: Adenosine 5'-phosphosulfate reductase (235 aa).

The [4Fe-4S] cluster site is built by cysteine 121, cysteine 122, cysteine 204, and cysteine 207. Catalysis depends on cysteine 230, which acts as the Nucleophile; cysteine thiosulfonate intermediate.

This sequence belongs to the PAPS reductase family. CysH subfamily. [4Fe-4S] cluster is required as a cofactor.

It is found in the cytoplasm. The enzyme catalyses [thioredoxin]-disulfide + sulfite + AMP + 2 H(+) = adenosine 5'-phosphosulfate + [thioredoxin]-dithiol. It participates in sulfur metabolism; hydrogen sulfide biosynthesis; sulfite from sulfate. Its function is as follows. Catalyzes the formation of sulfite from adenosine 5'-phosphosulfate (APS) using thioredoxin as an electron donor. In Geobacillus thermodenitrificans (strain NG80-2), this protein is Adenosine 5'-phosphosulfate reductase.